The following is a 160-amino-acid chain: Cytochrome b6-f complex subunit 4 (160 aa).

3 consecutive transmembrane segments (helical) span residues 36 to 56 (LLYM…GLAV), 95 to 115 (LLGV…PFIE), and 131 to 151 (TVFL…TLPI).

This sequence belongs to the cytochrome b family. PetD subfamily. As to quaternary structure, the 4 large subunits of the cytochrome b6-f complex are cytochrome b6, subunit IV (17 kDa polypeptide, petD), cytochrome f and the Rieske protein, while the 4 small subunits are petG, petL, petM and petN. The complex functions as a dimer.

The protein localises to the plastid. It is found in the chloroplast thylakoid membrane. Component of the cytochrome b6-f complex, which mediates electron transfer between photosystem II (PSII) and photosystem I (PSI), cyclic electron flow around PSI, and state transitions. The sequence is that of Cytochrome b6-f complex subunit 4 from Nephroselmis olivacea (Green alga).